The chain runs to 191 residues: UPF0312 protein Shewmr4_1178 (191 aa).

The N-terminal stretch at 1–22 is a signal peptide; it reads MKKQLLAALIGGSLLAPMAASA.

It belongs to the UPF0312 family. Type 1 subfamily.

The protein resides in the periplasm. The chain is UPF0312 protein Shewmr4_1178 from Shewanella sp. (strain MR-4).